The chain runs to 547 residues: uncharacterized protein (547 aa).

This sequence to B.pertussis prn N-terminal region.

This is an uncharacterized protein from Escherichia coli O157:H7.